Here is a 505-residue protein sequence, read N- to C-terminus: Lysine--tRNA ligase (505 aa).

The Mg(2+) site is built by Glu415 and Glu422.

It belongs to the class-II aminoacyl-tRNA synthetase family. In terms of assembly, homodimer. Requires Mg(2+) as cofactor.

The protein localises to the cytoplasm. The enzyme catalyses tRNA(Lys) + L-lysine + ATP = L-lysyl-tRNA(Lys) + AMP + diphosphate. This chain is Lysine--tRNA ligase, found in Salmonella paratyphi C (strain RKS4594).